A 65-amino-acid chain; its full sequence is Large ribosomal subunit protein bL35 (65 aa).

Residues 1–65 form a disordered region; sequence MPKIKTNRAA…GRLDRMLPYL (65 aa). The span at 10–44 shows a compositional bias: basic residues; the sequence is AAKRFRKTASGKYKAGHANRSHILTKKATKRKRNL. A compositionally biased stretch (basic and acidic residues) spans 50–65; sequence VRAEDAGRLDRMLPYL.

Belongs to the bacterial ribosomal protein bL35 family.

This Xylella fastidiosa (strain M23) protein is Large ribosomal subunit protein bL35.